The primary structure comprises 353 residues: 3-deoxy-D-manno-octulosonic acid transferase (353 aa).

Residue E31 is the Proton acceptor of the active site. Residues 211-212 (PR), 247-249 (FGI), and 273-276 (NLLE) each bind CMP.

This sequence belongs to the glycosyltransferase group 1 family. Glycosyltransferase 30 subfamily. In terms of assembly, can form homodimer, homotrimer and homotetramer.

Its subcellular location is the cell inner membrane. The catalysed reaction is lipid IVA (E. coli) + CMP-3-deoxy-beta-D-manno-octulosonate = alpha-Kdo-(2-&gt;6)-lipid IVA (E. coli) + CMP + H(+). It participates in bacterial outer membrane biogenesis; LPS core biosynthesis. Functionally, involved in lipopolysaccharide (LPS) biosynthesis. Catalyzes the transfer of a single 3-deoxy-D-manno-octulosonate (Kdo) residue from CMP-Kdo to lipid IV(A), the tetraacyldisaccharide-1,4'-bisphosphate precursor of lipid A. Is strictly monofunctional, i.e. is capable of adding only a single Kdo residue to the acceptor lipid. The chain is 3-deoxy-D-manno-octulosonic acid transferase (kdtA) from Aquifex aeolicus (strain VF5).